Reading from the N-terminus, the 469-residue chain is 3-isopropylmalate dehydratase large subunit (469 aa).

Cysteine 347, cysteine 407, and cysteine 410 together coordinate [4Fe-4S] cluster.

This sequence belongs to the aconitase/IPM isomerase family. LeuC type 1 subfamily. As to quaternary structure, heterodimer of LeuC and LeuD. Requires [4Fe-4S] cluster as cofactor.

The catalysed reaction is (2R,3S)-3-isopropylmalate = (2S)-2-isopropylmalate. It participates in amino-acid biosynthesis; L-leucine biosynthesis; L-leucine from 3-methyl-2-oxobutanoate: step 2/4. In terms of biological role, catalyzes the isomerization between 2-isopropylmalate and 3-isopropylmalate, via the formation of 2-isopropylmaleate. This chain is 3-isopropylmalate dehydratase large subunit, found in Prochlorococcus marinus subsp. pastoris (strain CCMP1986 / NIES-2087 / MED4).